Here is a 362-residue protein sequence, read N- to C-terminus: Beta-ketoacyl-[acyl-carrier-protein] synthase III 2 (362 aa).

Active-site residues include Cys-113 and His-251. The interval 252 to 256 (QANIR) is ACP-binding. Asn-281 is a catalytic residue.

Belongs to the thiolase-like superfamily. FabH family. Homodimer.

The protein resides in the cytoplasm. It catalyses the reaction malonyl-[ACP] + acetyl-CoA + H(+) = 3-oxobutanoyl-[ACP] + CO2 + CoA. The protein operates within lipid metabolism; fatty acid biosynthesis. Catalyzes the condensation reaction of fatty acid synthesis by the addition to an acyl acceptor of two carbons from malonyl-ACP. Catalyzes the first condensation reaction which initiates fatty acid synthesis and may therefore play a role in governing the total rate of fatty acid production. Possesses both acetoacetyl-ACP synthase and acetyl transacylase activities. Its substrate specificity determines the biosynthesis of branched-chain and/or straight-chain of fatty acids. The chain is Beta-ketoacyl-[acyl-carrier-protein] synthase III 2 from Vibrio vulnificus (strain YJ016).